The sequence spans 123 residues: MQRSTRQQAGREAEAFALQFLQRQGLRLIEQNWLCKRGELDLVMLDGDTVVFVEVRYRRHSGWGGAMESVDFRKQEKLVTAAQLFLQHATAWANHPCRFDVIAIEGEPGNAAPLNWIKSAFDS.

The protein belongs to the UPF0102 family.

This Pseudomonas syringae pv. syringae (strain B728a) protein is UPF0102 protein Psyr_4114.